An 814-amino-acid chain; its full sequence is MPSTPLSATVEALSEDAAQARHAELSRAIERANQLYYNEDAPELTDAEYDALRQELEAIEARFPALTGTTEASAGVGAKPSEKFAKVRHAVPMLSLGNAFADEDVDEFVARVRRFLNLPAEEAVAFTAEPKIDGLSLSLRYEAGRLVTAATRGDGEVGENVTANALTVDDIPETLSGEGIPEVLEVRGEIYLSHEDFAAINARQEAAGKPLFANPRNAAAGSLRQLDPAITASRPLRFFAYAWGEVSEPFTDTQSAVLERFRGWGLPVNPRTKLCRSAEEMIAHYRAIEAERAGLGYDIDGVVYKVDDLGFQRRLGFVSRAPRWALAHKFAAQEAITELLAIDINVGRTGSLNPLARLKPVTVGGVVVSNATLHNEGYVQGVGADGEPIREGRDIRVGDTVIVVRAGDVIPKVRDVVIEKRPADAVPYVFPDTCPACGSRAVRELNPRTKKLDAIRRCTGGLICPAQGVERLKHFVSRNGLDLEGFGQTYIEVLFEAGLVKQPADLFRLEFEPLKAAIVARREALSAQRRTEGEPAPKKPTKKKGEEEDKAIKNLLASLDARRTIPLNRFLFALGIPQIGESTAKALAKRFPDMPALMAALAAATREQAGRDWLELSALPRIGPGTRDRLFETLDPLPGEAMQDLSLGARLRGRLTPSQREAVLAHYGSEAEADAALERAASQRPGDAYRLFADDGEIGPVATDSLIQFFSEPHNDAAVRALLEEVGTEPLAATTSAAAFAGKTVVFTGSLEKMTRSEAKATAERLGAKVSGSVSAKTDLVVAGPGAGSKLKDAEKHGVKVVSEDDWLAMLAEA.

Residues 46–50, 95–96, and Glu129 each bind NAD(+); these read DAEYD and SL. Lys131 functions as the N6-AMP-lysine intermediate in the catalytic mechanism. NAD(+) contacts are provided by Arg152, Glu189, Lys305, and Lys329. Cys434, Cys437, Cys458, and Cys464 together coordinate Zn(2+). Residues 526 to 549 are disordered; sequence SAQRRTEGEPAPKKPTKKKGEEED. Positions 735–814 constitute a BRCT domain; that stretch reads TSAAAFAGKT…DDWLAMLAEA (80 aa).

It belongs to the NAD-dependent DNA ligase family. LigA subfamily. The cofactor is Mg(2+). It depends on Mn(2+) as a cofactor.

It catalyses the reaction NAD(+) + (deoxyribonucleotide)n-3'-hydroxyl + 5'-phospho-(deoxyribonucleotide)m = (deoxyribonucleotide)n+m + AMP + beta-nicotinamide D-nucleotide.. In terms of biological role, DNA ligase that catalyzes the formation of phosphodiester linkages between 5'-phosphoryl and 3'-hydroxyl groups in double-stranded DNA using NAD as a coenzyme and as the energy source for the reaction. It is essential for DNA replication and repair of damaged DNA. In Methylorubrum extorquens (strain CM4 / NCIMB 13688) (Methylobacterium extorquens), this protein is DNA ligase.